The following is a 367-amino-acid chain: Probable cysteine protease RD19D (367 aa).

Residues 1-22 (MVAKALAQLITCIILFCHVVAS) form the signal peptide. Positions 23-136 (VEDLTIRQVT…AEAPMVEVDG (114 aa)) are cleaved as a propeptide — activation peptide. Asn61 is a glycosylation site (N-linked (GlcNAc...) asparagine). Cystine bridges form between Cys158–Cys208 and Cys192–Cys241. Cys161 is a catalytic residue. A glycan (N-linked (GlcNAc...) asparagine) is linked at Asn254. Cysteines 297 and 352 form a disulfide. Residues His304 and Asn331 contribute to the active site.

Belongs to the peptidase C1 family.

Functionally, probable thiol protease. The sequence is that of Probable cysteine protease RD19D from Arabidopsis thaliana (Mouse-ear cress).